Here is a 275-residue protein sequence, read N- to C-terminus: Large ribosomal subunit protein uL2 (275 aa).

The interval 221–275 (RGTAMNPVDHPHGGGEGRTGEGRVPVNPWGQPTKGYRTRSNKRTNSMIVQRRHKR) is disordered. Basic and acidic residues predominate over residues 229-241 (DHPHGGGEGRTGE).

It belongs to the universal ribosomal protein uL2 family. As to quaternary structure, part of the 50S ribosomal subunit. Forms a bridge to the 30S subunit in the 70S ribosome.

Functionally, one of the primary rRNA binding proteins. Required for association of the 30S and 50S subunits to form the 70S ribosome, for tRNA binding and peptide bond formation. It has been suggested to have peptidyltransferase activity; this is somewhat controversial. Makes several contacts with the 16S rRNA in the 70S ribosome. The polypeptide is Large ribosomal subunit protein uL2 (Dechloromonas aromatica (strain RCB)).